The following is a 157-amino-acid chain: Ubiquitin-like protein 4A (157 aa).

The Ubiquitin-like domain maps to 1–76; the sequence is MQLTVKALQG…LNLVVKPLEK (76 aa). Residue Lys48 forms a Glycyl lysine isopeptide (Lys-Gly) (interchain with G-Cter in ubiquitin) linkage. Position 90 is a phosphoserine (Ser90). Positions 96 to 138 are required and sufficient for interaction with BAG6; that stretch reads WQLISKVLARHFSAADASRVLEQLQRDYERSLSRLTLDDIERL.

Component of the BAG6/BAT3 complex, at least composed of BAG6, UBL4A and GET4/TRC35. Interacts with BAG6; the interaction is direct and required for UBL4A protein stability. Interacts with USP13; may be indirect via BAG6. Polyubiquitinated. Ubiquitination by AMFR and deubiquitination by USP13 may regulate the interaction between the BAG6/BAT3 complex and SGTA and therefore may regulate client proteins fate.

It localises to the cytoplasm. The protein resides in the cytosol. Its subcellular location is the nucleus. As part of a cytosolic protein quality control complex, the BAG6/BAT3 complex, maintains misfolded and hydrophobic patches-containing proteins in a soluble state and participates in their proper delivery to the endoplasmic reticulum or alternatively can promote their sorting to the proteasome where they undergo degradation. The BAG6/BAT3 complex is involved in the post-translational delivery of tail-anchored/type II transmembrane proteins to the endoplasmic reticulum membrane. Recruited to ribosomes, it interacts with the transmembrane region of newly synthesized tail-anchored proteins and together with SGTA and ASNA1 mediates their delivery to the endoplasmic reticulum. Client proteins that cannot be properly delivered to the endoplasmic reticulum are ubiquitinated and sorted to the proteasome. Similarly, the BAG6/BAT3 complex also functions as a sorting platform for proteins of the secretory pathway that are mislocalized to the cytosol either delivering them to the proteasome for degradation or to the endoplasmic reticulum. The BAG6/BAT3 complex also plays a role in the endoplasmic reticulum-associated degradation (ERAD), a quality control mechanism that eliminates unwanted proteins of the endoplasmic reticulum through their retrotranslocation to the cytosol and their targeting to the proteasome. It maintains these retrotranslocated proteins in an unfolded yet soluble state condition in the cytosol to ensure their proper delivery to the proteasome. The sequence is that of Ubiquitin-like protein 4A from Homo sapiens (Human).